The sequence spans 115 residues: Large ribosomal subunit protein uL24 (115 aa).

Disordered stretches follow at residues V45–K77 and K96–S115.

It belongs to the universal ribosomal protein uL24 family. Part of the 50S ribosomal subunit.

Its function is as follows. One of two assembly initiator proteins, it binds directly to the 5'-end of the 23S rRNA, where it nucleates assembly of the 50S subunit. One of the proteins that surrounds the polypeptide exit tunnel on the outside of the subunit. In Rhodopirellula baltica (strain DSM 10527 / NCIMB 13988 / SH1), this protein is Large ribosomal subunit protein uL24.